A 175-amino-acid polypeptide reads, in one-letter code: UPF0398 protein SPD_0338 (175 aa).

It belongs to the UPF0398 family.

This is UPF0398 protein SPD_0338 from Streptococcus pneumoniae serotype 2 (strain D39 / NCTC 7466).